Here is a 494-residue protein sequence, read N- to C-terminus: 3-octaprenyl-4-hydroxybenzoate carboxy-lyase (494 aa).

Residue asparagine 172 coordinates Mn(2+). Prenylated FMN is bound by residues 175 to 177 (IYR), 189 to 191 (RWL), and 194 to 195 (RG). Position 238 (glutamate 238) interacts with Mn(2+). Residue aspartate 287 is the Proton donor of the active site.

The protein belongs to the UbiD family. As to quaternary structure, homohexamer. Requires prenylated FMN as cofactor. The cofactor is Mn(2+).

The protein resides in the cell membrane. It catalyses the reaction a 4-hydroxy-3-(all-trans-polyprenyl)benzoate + H(+) = a 2-(all-trans-polyprenyl)phenol + CO2. The protein operates within cofactor biosynthesis; ubiquinone biosynthesis. Its function is as follows. Catalyzes the decarboxylation of 3-octaprenyl-4-hydroxy benzoate to 2-octaprenylphenol, an intermediate step in ubiquinone biosynthesis. The sequence is that of 3-octaprenyl-4-hydroxybenzoate carboxy-lyase from Citrobacter koseri (strain ATCC BAA-895 / CDC 4225-83 / SGSC4696).